The sequence spans 392 residues: Selenide, water dikinase 1 (392 aa).

Ser-2 carries the post-translational modification N-acetylserine. Cys-31 is an active-site residue. ATP contacts are provided by residues Lys-32, 67 to 69 (GMD), Asp-87, Asp-110, and 161 to 164 (GGQT). Asp-69 is a binding site for Mg(2+). Asp-110 contacts Mg(2+). Position 265 (Asp-265) interacts with Mg(2+).

This sequence belongs to the selenophosphate synthase 1 family. Class II subfamily. In terms of assembly, homodimer. Mg(2+) serves as cofactor.

The protein localises to the cell membrane. It is found in the nucleus membrane. The catalysed reaction is hydrogenselenide + ATP + H2O = selenophosphate + AMP + phosphate + 2 H(+). Functionally, synthesizes selenophosphate from selenide and ATP. The polypeptide is Selenide, water dikinase 1 (Sephs1) (Mus musculus (Mouse)).